We begin with the raw amino-acid sequence, 4351 residues long: Protocadherin Fat 2 (4351 aa).

An N-terminal signal peptide occupies residues 1–18 (MTLVLLGVAMVLLHRAAC). Residues 19-4050 (EKPLEETITP…IKRGDWGQQE (4032 aa)) lie on the Extracellular side of the membrane. 2 Cadherin domains span residues 34–148 (THSL…KPLF) and 149–256 (SPPS…PPVI). N39, N210, N280, and N330 each carry an N-linked (GlcNAc...) asparagine glycan. Cadherin domains lie at 363–458 (EKAV…APVF), 459–564 (NRSS…QPMF), 565–669 (EEVN…VPVQ), 716–820 (DHFP…PPRF), 821–925 (PPGG…PPQC), 926–1032 (ITEH…SPHF), 1033–1142 (SSFV…RPVF), 1138–1242 (SRPV…SPMF), 1243–1346 (SHKL…SSIP), 1350–1448 (DESH…RPQF), 1449–1555 (LQDH…SPHF), 1556–1660 (TQPR…APIF), 1661–1758 (SKDE…APAF), 1759–1872 (LKST…PPRF), 1873–1968 (SEQI…SLQF), 1969–2070 (DQDI…IPEF), 2071–2171 (QHLP…NPLF), 2172–2272 (QSPY…PPTF), 2273–2379 (SQLV…PPEF), 2380–2481 (REPQ…SPEF), 2482–2585 (QQNV…APQF), 2586–2692 (KASG…LPKF), 2693–2799 (SEPL…RPVF), 2800–2908 (EADP…PPRF), 2909–3013 (ASED…SPQC), 3014–3115 (SQLL…APRF), 3116–3220 (FPSH…LPIF), 3221–3323 (LNSE…HPRF), 3324–3428 (THDL…PPRF), 3429–3533 (FQLN…PPST), and 3534–3631 (LPLE…APQQ). Residues N459, N568, N627, and N789 are each glycosylated (N-linked (GlcNAc...) asparagine). N996 carries N-linked (GlcNAc...) asparagine glycosylation. N-linked (GlcNAc...) asparagine glycosylation is found at N1175, N1276, and N1417. Residues N1899, N1998, N2007, N2102, N2165, N2183, N2325, N2368, N2387, N2430, N2470, N2547, and N2597 are each glycosylated (N-linked (GlcNAc...) asparagine). 3 N-linked (GlcNAc...) asparagine glycosylation sites follow: N3127, N3278, and N3312. N-linked (GlcNAc...) asparagine glycosylation is found at N3432, N3603, N3770, N3774, N3815, N3842, N3875, and N3906. The region spanning 3775 to 3946 (GTTWRFSGQS…YLETWALSQC (172 aa)) is the Laminin G-like domain. 4 disulfide bridges follow: C3914–C3946, C3953–C3964, C3958–C3974, and C3976–C3985. EGF-like domains are found at residues 3949-3986 (PGTT…RNCE) and 3988-4024 (GREN…DRCE). Residue N3991 is glycosylated (N-linked (GlcNAc...) asparagine). 3 disulfides stabilise this stretch: C3992/C4003, C3997/C4012, and C4014/C4023. A helical membrane pass occupies residues 4051 to 4071 (FLVIIVALPLLIIATVGLLLY). The Cytoplasmic segment spans residues 4072 to 4351 (CRRCKSHKPV…DYGSCEEVMF (280 aa)). Positions 4313–4340 (DCEVNGGPAPGRSQPRAPPNYEGSDMVE) are disordered.

In terms of assembly, homodimer.

The protein localises to the cell membrane. The protein resides in the cell junction. It localises to the golgi apparatus. It is found in the trans-Golgi network. Involved in the regulation of cell migration. May be involved in mediating the organization of the parallel fibers of granule cells during cerebellar development. The chain is Protocadherin Fat 2 (Fat2) from Mus musculus (Mouse).